We begin with the raw amino-acid sequence, 426 residues long: Probable imidazolonepropionase (426 aa).

Residues Y159 and H192 each coordinate 4-imidazolone-5-propanoate. Residue Y159 coordinates N-formimidoyl-L-glutamate. H260 contacts Fe(3+). A Zn(2+)-binding site is contributed by H260. E263 serves as a coordination point for 4-imidazolone-5-propanoate. D334 serves as a coordination point for Fe(3+). D334 contributes to the Zn(2+) binding site. N336 contacts N-formimidoyl-L-glutamate.

This sequence belongs to the metallo-dependent hydrolases superfamily. HutI family. It depends on Zn(2+) as a cofactor. Fe(3+) serves as cofactor.

It carries out the reaction 4-imidazolone-5-propanoate + H2O = N-formimidoyl-L-glutamate. The protein operates within amino-acid degradation; L-histidine degradation into L-glutamate; N-formimidoyl-L-glutamate from L-histidine: step 3/3. The chain is Probable imidazolonepropionase (AMDHD1) from Bos taurus (Bovine).